The primary structure comprises 217 residues: Probable GTP-binding protein EngB (217 aa).

The EngB-type G domain maps to 33–217 (GPTEIAFAGR…RAAIELAVAR (185 aa)). GTP-binding positions include 41–48 (GRSNVGKS), 68–72 (GRTQE), 95–98 (DMPG), 162–165 (TKTD), and 196–198 (TSS). 2 residues coordinate Mg(2+): Ser-48 and Thr-70.

This sequence belongs to the TRAFAC class TrmE-Era-EngA-EngB-Septin-like GTPase superfamily. EngB GTPase family. Mg(2+) serves as cofactor.

In terms of biological role, necessary for normal cell division and for the maintenance of normal septation. The protein is Probable GTP-binding protein EngB of Sinorhizobium medicae (strain WSM419) (Ensifer medicae).